An 83-amino-acid polypeptide reads, in one-letter code: Translational regulator CsrA (83 aa).

The protein belongs to the CsrA/RsmA family. As to quaternary structure, homodimer; the beta-strands of each monomer intercalate to form a hydrophobic core, while the alpha-helices form wings that extend away from the core.

It localises to the cytoplasm. In terms of biological role, a translational regulator that binds mRNA to regulate translation initiation and/or mRNA stability. Usually binds in the 5'-UTR at or near the Shine-Dalgarno sequence preventing ribosome-binding, thus repressing translation. Its main target seems to be the major flagellin gene, while its function is anatagonized by FliW. This Nocardioides sp. (strain ATCC BAA-499 / JS614) protein is Translational regulator CsrA.